Here is a 172-residue protein sequence, read N- to C-terminus: Stellate protein CG33243 (172 aa).

It belongs to the casein kinase 2 subunit beta family. Interacts in vitro with the casein kinase 2 alpha subunit (CkII-alpha). The relevance of such interaction is however unclear in vivo. Probably not expressed in wild-type flies. In males lacking the Y chromosome, it is testis-specific and constitutes the main component of star-shaped crystals.

Functionally, unknown. In males lacking the Y chromosome, its strong overexpression leads to the appearance of proteinaceous star-shaped crystals in the primary spermatocytes causing meiotic drive, possibly by interfering with normal casein kinase 2 activity. The protein is Stellate protein CG33243 (Ste:CG33243) of Drosophila melanogaster (Fruit fly).